The primary structure comprises 277 residues: Large ribosomal subunit protein uL2 (277 aa).

The disordered stretch occupies residues 219-277 (TVRGSVMNPNDHPHGGGEGKAPVGRKAPSTPWGKPALGLKTRNKKAKSDKLIVRRRNEK). Positions 264-277 (AKSDKLIVRRRNEK) are enriched in basic and acidic residues.

It belongs to the universal ribosomal protein uL2 family. Part of the 50S ribosomal subunit. Forms a bridge to the 30S subunit in the 70S ribosome.

Functionally, one of the primary rRNA binding proteins. Required for association of the 30S and 50S subunits to form the 70S ribosome, for tRNA binding and peptide bond formation. It has been suggested to have peptidyltransferase activity; this is somewhat controversial. Makes several contacts with the 16S rRNA in the 70S ribosome. This is Large ribosomal subunit protein uL2 from Streptococcus pneumoniae serotype 2 (strain D39 / NCTC 7466).